The sequence spans 1091 residues: Protein diaphanous (1091 aa).

Residues 1–37 (MSRHEKTKSTGGGLLDSLFGRPSKSKGGTISSGTLAH) form a disordered region. The segment at 1-56 (MSRHEKTKSTGGGLLDSLFGRPSKSKGGTISSGTLAHGGRPVSADNYVVPGVEDFE) is basic region. The span at 25–34 (SKGGTISSGT) shows a compositional bias: low complexity. Positions 59–431 (IQQLSVAELD…QIVFHKGYCD (373 aa)) constitute a GBD/FH3 domain. Residues 455-496 (KAKESKRSEEYEKKIEQLESAKQEAEAKAAHLEEKVKLMEAN) adopt a coiled-coil conformation. Disordered regions lie at residues 499–589 (AAPS…MMMG), 994–1021 (RLQE…DMDA), and 1039–1072 (GSAF…RTRV). Residues 512–572 (PMPPPPPGGG…MGGPPPPPMP (61 aa)) are compositionally biased toward pro residues. Positions 512-596 (PMPPPPPGGG…MMGPMVPVLP (85 aa)) constitute an FH1 domain. The region spanning 601–1001 (PKKKWDVKNP…KRRLQEAREQ (401 aa)) is the FH2 domain. A compositionally biased stretch (basic and acidic residues) spans 994 to 1010 (RLQEAREQSAREQQERQ). The DAD domain maps to 1022 to 1054 (PQTQEGVMDSLLEALQTGSAFGQRNRQARRQRP).

The protein belongs to the formin homology family. Diaphanous subfamily. In terms of assembly, may interact (via CBD/FH3 domain) with Rho1.

The protein resides in the cytoplasm. Its subcellular location is the cytoskeleton. It localises to the cleavage furrow. It is found in the apical cell membrane. Functionally, required for cytokinesis in both mitosis and meiosis. Has a role in actin cytoskeleton organization and is essential for many, if not all, actin-mediated events involving membrane invagination. May serve as a mediator between signaling molecules and actin organizers at specific phases of the cell cycle. Possible component of the contractile ring or may control its function. The chain is Protein diaphanous (dia) from Drosophila melanogaster (Fruit fly).